The chain runs to 387 residues: Phosphoglycerate kinase (387 aa).

Substrate-binding positions include 21 to 23 (DLN), Arg-36, 59 to 62 (HLGR), Arg-113, and Arg-146. ATP-binding positions include Lys-197, Glu-314, and 340 to 343 (GGDT).

This sequence belongs to the phosphoglycerate kinase family. Monomer.

The protein localises to the cytoplasm. It carries out the reaction (2R)-3-phosphoglycerate + ATP = (2R)-3-phospho-glyceroyl phosphate + ADP. It participates in carbohydrate degradation; glycolysis; pyruvate from D-glyceraldehyde 3-phosphate: step 2/5. The polypeptide is Phosphoglycerate kinase (Aliivibrio fischeri (strain MJ11) (Vibrio fischeri)).